The chain runs to 849 residues: Probable ATP-dependent RNA helicase ddx20 (849 aa).

Residues Phe-9–Lys-39 form a disordered region. The short motif at Ile-55–Leu-83 is the Q motif element. Residues Arg-77, Gln-82, Ala-99–Thr-106, and Gly-102–Ile-107 contribute to the ATP site. One can recognise a Helicase ATP-binding domain in the interval Ile-86–Val-319. The DEAD box signature appears at Asp-255–Asp-258. The Helicase C-terminal domain maps to Lys-355–Asn-499. 4 disordered regions span residues Gln-480 to Glu-504, Ile-572 to Asn-644, Ser-667 to Tyr-737, and Asn-761 to Tyr-817. Composition is skewed to acidic residues over residues Asn-583–Tyr-595, Glu-604–Tyr-615, and Glu-624–Asn-644. Low complexity-rich tracts occupy residues Ser-667 to Tyr-687 and Lys-696 to Asn-720.

The protein belongs to the DEAD box helicase family. DDX20 subfamily. As to quaternary structure, part of the core SMN complex.

It localises to the cytoplasm. Its subcellular location is the nucleus. The catalysed reaction is ATP + H2O = ADP + phosphate + H(+). The SMN complex catalyzes the assembly of small nuclear ribonucleoproteins (snRNPs), the building blocks of the spliceosome, and thereby plays an important role in the splicing of cellular pre-mRNAs. Most spliceosomal snRNPs contain a common set of Sm proteins SNRPB, SNRPD1, SNRPD2, SNRPD3, SNRPE, SNRPF and SNRPG that assemble in a heptameric protein ring on the Sm site of the small nuclear RNA to form the core snRNP (Sm core). In the cytosol, the Sm proteins SNRPD1, SNRPD2, SNRPE, SNRPF and SNRPG are trapped in an inactive 6S pICln-Sm complex by the chaperone CLNS1A that controls the assembly of the core snRNP. To assemble core snRNPs, the SMN complex accepts the trapped 5Sm proteins from CLNS1A forming an intermediate. Binding of snRNA inside 5Sm triggers eviction of the SMN complex, thereby allowing binding of SNRPD3 and SNRPB to complete assembly of the core snRNP. May also play a role in the metabolism of small nucleolar ribonucleoprotein (snoRNPs). This is Probable ATP-dependent RNA helicase ddx20 (ddx20) from Dictyostelium discoideum (Social amoeba).